Consider the following 261-residue polypeptide: Lys-63-specific deubiquitinase BRCC36 (261 aa).

The region spanning 6-149 (VHIQGDAFLV…YTCFQSVQAQ (144 aa)) is the MPN domain. The Zn(2+) site is built by histidine 92, histidine 94, and aspartate 105. A JAMM motif motif is present at residues 92–105 (HSHPHITVWPSHVD).

This sequence belongs to the peptidase M67A family. BRCC36 subfamily. Component of the BRCA1-A complex, at least composed of brca1, bard1, uimc1/rap80, abraxas1, brcc3/brcc36, babam2 and babam1/nba1. In the BRCA1-A complex, interacts directly with abraxas1 and babam2. Component of the BRISC complex, at least composed of abraxas2, brcc3/brcc36, babam2 and babam1/nba1. Within the complex, interacts directly with abraxas2. Both the BRCA1-A complex and the BRISC complex bind polyubiquitin. Zn(2+) serves as cofactor.

It is found in the nucleus. The protein localises to the cytoplasm. The protein resides in the cytoskeleton. It localises to the spindle pole. Functionally, metalloprotease that specifically cleaves 'Lys-63'-linked polyubiquitin chains. Does not have activity toward 'Lys-48'-linked polyubiquitin chains. Component of the BRCA1-A complex, a complex that specifically recognizes 'Lys-63'-linked ubiquitinated histones H2A and H2AX at DNA lesions sites, leading to target the brca1-bard1 heterodimer to sites of DNA damage at double-strand breaks (DSBs). In the BRCA1-A complex, it specifically removes 'Lys-63'-linked ubiquitin on histones H2A and H2AX, antagonizing the rnf8-dependent ubiquitination at double-strand breaks (DSBs). Catalytic subunit of the BRISC complex, a multiprotein complex that specifically cleaves 'Lys-63'-linked ubiquitin in various substrates. Mediates the specific 'Lys-63'-specific deubiquitination associated with the COP9 signalosome complex (CSN), via the interaction of the BRISC complex with the CSN complex. The BRISC complex is required for normal mitotic spindle assembly and microtubule attachment to kinetochores via its role in deubiquitinating numa1. Plays a role in interferon signaling via its role in the deubiquitination of the interferon receptor ifnar1; deubiquitination increases ifnar1 activity by enhancing its stability and cell surface expression. Acts as a regulator of the NLRP3 inflammasome by mediating deubiquitination of nlrp3. Down-regulates the response to bacterial lipopolysaccharide (LPS) via its role in ifnar1 deubiquitination. This Xenopus tropicalis (Western clawed frog) protein is Lys-63-specific deubiquitinase BRCC36 (brcc3).